Here is a 436-residue protein sequence, read N- to C-terminus: Xylose isomerase (436 aa).

Active-site residues include His100 and Asp103. Glu231, Glu267, His270, Asp295, Asp306, Asp308, and Asp338 together coordinate Mg(2+).

The protein belongs to the xylose isomerase family. In terms of assembly, homotetramer. Mg(2+) is required as a cofactor.

The protein resides in the cytoplasm. The enzyme catalyses alpha-D-xylose = alpha-D-xylulofuranose. The polypeptide is Xylose isomerase (Rhizobium etli (strain ATCC 51251 / DSM 11541 / JCM 21823 / NBRC 15573 / CFN 42)).